We begin with the raw amino-acid sequence, 401 residues long: Bifunctional D-cysteine desulfhydrase/1-aminocyclopropane-1-carboxylate deaminase, mitochondrial (401 aa).

Residues 1 to 37 constitute a mitochondrion transit peptide; sequence MRGRSLTLSRVKLELARRSMSATSVPSMADFLTKKPY. At arginine 2 the chain carries N-acetylserine. The residue at position 93 (lysine 93) is an N6-(pyridoxal phosphate)lysine. Residue serine 120 is the Nucleophile of the active site.

It belongs to the ACC deaminase/D-cysteine desulfhydrase family. Pyridoxal 5'-phosphate serves as cofactor. In terms of tissue distribution, highly expressed in stems and cauline leaves, and at lower levels in roots, rosette leaves and flowers.

The protein resides in the mitochondrion. The enzyme catalyses D-cysteine + H2O = hydrogen sulfide + pyruvate + NH4(+) + H(+). It catalyses the reaction 1-aminocyclopropane-1-carboxylate + H2O = 2-oxobutanoate + NH4(+). Catalyzes the production of hydrogen sulfide (H2S) from cysteine. Is mainly responsible for the degradation of cysteine to generate H2S, a regulator of stomatal movement and closure. Has high affinity for D-cysteine. Its function is as follows. Possesses 1-aminocyclopropane-1-carboxylic acid (ACC) deaminase activity. Acts as a regulator of ACC levels and causes changes in ethylene levels. This is Bifunctional D-cysteine desulfhydrase/1-aminocyclopropane-1-carboxylate deaminase, mitochondrial (DCD) from Arabidopsis thaliana (Mouse-ear cress).